The primary structure comprises 343 residues: Protein RecA (343 aa).

66-73 (GPESSGKT) is a binding site for ATP.

Belongs to the RecA family.

Its subcellular location is the cytoplasm. Can catalyze the hydrolysis of ATP in the presence of single-stranded DNA, the ATP-dependent uptake of single-stranded DNA by duplex DNA, and the ATP-dependent hybridization of homologous single-stranded DNAs. It interacts with LexA causing its activation and leading to its autocatalytic cleavage. This is Protein RecA from Dechloromonas aromatica (strain RCB).